A 230-amino-acid chain; its full sequence is Acetyltransferase (230 aa).

The 88-residue stretch at 143–230 folds into the N-acetyltransferase domain; it reads RYLDGKVICD…RVAVYKARQT (88 aa).

The protein operates within mycotoxin biosynthesis. In terms of biological role, acetyltransferase; part of the satratoxin SC3 cluster involved in the biosynthesis of satratoxins, trichothecene mycotoxins that are associated with human food poisonings. Satratoxins are suggested to be made by products of multiple gene clusters (SC1, SC2 and SC3) that encode 21 proteins in all, including polyketide synthases, acetyltransferases, and other enzymes expected to modify the trichothecene skeleton. SC1 encodes 10 proteins, SAT1 to SAT10. The largest are SAT8, which encodes a putative polyketide synthase (PKS) with a conventional non-reducing architecture, and SAT10, a putative protein containing four ankyrin repeats and thus may be involved in protein scaffolding. The putative short-chain reductase SAT3 may assist the PKS in some capacity. SAT6 contains a secretory lipase domain and acts probably as a trichothecene esterase. SAT5 encodes a putative acetyltransferase, and so, with SAT6, may affect endogenous protection from toxicity. The probable transcription factor SAT9 may regulate the expression of the SC1 cluster. SC2 encodes proteins SAT11 to SAT16, the largest of which encodes the putative reducing PKS SAT13. SAT11 is a cytochrome P450 monooxygenase, while SAT14 and SAT16 are probable acetyltransferases. The SC2 cluster may be regulated by the transcription factor SAT15. SC3 is a small cluster that encodes 5 proteins, SAT17 to SAT21. SAT21 is a putative MFS-type transporter which may have a role in exporting secondary metabolites. The four other proteins putatively encoded in SC3 include the taurine hydroxylase-like protein SAT17, the O-methyltransferase SAT18, the acetyltransferase SAT19, and the Cys6-type zinc finger SAT20, the latter being probably involved in regulation of SC3 expression. The protein is Acetyltransferase of Stachybotrys chartarum (strain CBS 109288 / IBT 7711) (Toxic black mold).